We begin with the raw amino-acid sequence, 363 residues long: Aminopyrrolnitrin oxygenase PrnD (363 aa).

One can recognise a Rieske domain in the interval 29–137 (WYVAMRSNEL…TAERYGYVWV (109 aa)). Residues Cys-69, His-71, Cys-88, and His-91 each contribute to the [2Fe-2S] cluster site.

Homodimer. The cofactor is [2Fe-2S] cluster. Fe cation serves as cofactor. FMN is required as a cofactor.

The catalysed reaction is aminopyrrolnitrin + NADPH + 2 O2 + H(+) = pyrrolnitrin + NADP(+) + 2 H2O. It functions in the pathway antibiotic biosynthesis. Its function is as follows. Involved in the biosynthesis of the antifungal antibiotic pyrrolnitrin (PRN). Catalyzes the oxidation of the amino group of aminopyrrolnitrin (APRN) to a nitro group to form PRN. It has high substrate specificity toward physiological substrate aminopyrrolnitrin, p-aminobenzylamine (pABA), p-aminobenzyl alcohol, and p-aminophenyl alanine. The sequence is that of Aminopyrrolnitrin oxygenase PrnD (prnD) from Pseudomonas fluorescens.